The primary structure comprises 424 residues: Isoflavipucine cluster transcription factor ATEG_00326 (424 aa).

Positions 10-38 (CDRCHGQKLRCIHSGGGPCVRCAKAKATC) form a DNA-binding region, zn(2)-C6 fungal-type. The segment at 265 to 286 (ARMQTPEGTPERTSESSPSGPP) is disordered.

Its subcellular location is the nucleus. Transcription factor that regulates the expression of the gene cluster that mediates the biosynthesis of isoflavipucine. The chain is Isoflavipucine cluster transcription factor ATEG_00326 from Aspergillus terreus (strain NIH 2624 / FGSC A1156).